A 303-amino-acid polypeptide reads, in one-letter code: Mitochondrial carrier homolog 2 (303 aa).

An N-acetylalanine modification is found at A2. Residues 2–15 (ADAASQVLLGSGLT) lie on the Mitochondrial intermembrane side of the membrane. 2 Solcar repeats span residues 2–98 (ADAA…YQEC) and 118–206 (DRVI…VNTY). A helical transmembrane segment spans residues 16–36 (ILSQPLMYVKVLIQVGYEPLA). The Cytoplasmic portion of the chain corresponds to 37–77 (PTVGRNIFGRQVCQLPGLFCYAQHIASIDGKRGLFTGLTPR). Residues 78–92 (LCSGVLGTVVHGKVL) traverse the membrane as a helical segment. Over 93–135 (QHYQECDKAEESGSGNVQKEVSSSFDRVIKETTREMMARSAAT) the chain is Mitochondrial intermembrane. Residues 136–156 (LITHPFHVITLRSMVQFIGRE) traverse the membrane as a helical segment. Residues 157-180 (SKYCGLCDSIATIYREEGILGFFA) are Cytoplasmic-facing. A helical transmembrane segment spans residues 181 to 199 (GLIPRLLGDIISLWLCNSL). At 200–231 (AYLVNTYALDSGVSTMNEMKSYSQAVTGFFAS) the chain is on the mitochondrial intermembrane side. A helical membrane pass occupies residues 232 to 252 (MLTYPFVLVSNLMAVNNCGLA). Residues 253–280 (GGCPPYAPIYSSWIDCWCMLQKEGNMSR) lie on the Cytoplasmic side of the membrane. The helical transmembrane segment at 281 to 303 (GNSLFFRKVPFGKTYCCDLRMLI) threads the bilayer.

Belongs to the mitochondrial carrier (TC 2.A.29) family. As to quaternary structure, interacts with p15BID.

The protein localises to the mitochondrion outer membrane. Protein insertase that mediates insertion of transmembrane proteins into the mitochondrial outer membrane. Catalyzes insertion of proteins with alpha-helical transmembrane regions, such as signal-anchored, tail-anchored and multi-pass membrane proteins. Does not mediate insertion of beta-barrel transmembrane proteins. Also acts as a receptor for the truncated form of pro-apoptotic BH3-interacting domain death agonist (p15 BID) and has therefore a critical function in apoptosis. Regulates the quiescence/cycling of hematopoietic stem cells (HSCs). Acts as a regulator of mitochondrial fusion, essential for the naive-to-primed interconversion of embryonic stem cells (ESCs). Acts as a regulator of lipid homeostasis and has a regulatory role in adipocyte differentiation and biology. The protein is Mitochondrial carrier homolog 2 (MTCH2) of Bos taurus (Bovine).